The sequence spans 77 residues: Conotoxin ArMSGL-0141 (77 aa).

The N-terminal stretch at 1 to 18 (MSGLGILVLTLLLLVYMA) is a signal peptide. The propeptide occupies 19-44 (TSHQDAGEKQATQRDAINVRRRRSLT). Intrachain disulfides connect cysteine 51-cysteine 63, cysteine 55-cysteine 71, and cysteine 62-cysteine 75. The residue at position 76 (phenylalanine 76) is a Phenylalanine amide.

Belongs to the conotoxin O3 superfamily. In terms of tissue distribution, expressed by the venom duct.

It is found in the secreted. This chain is Conotoxin ArMSGL-0141, found in Conus arenatus (Sand-dusted cone).